The sequence spans 311 residues: Cytosolic Fe-S cluster assembly factor Nubp1 homolog (311 aa).

The segment at 1 to 21 (MQAPPPEHCPGVESEEAGKGS) is disordered. [4Fe-4S] cluster contacts are provided by C9, C23, C26, and C32. An ATP-binding site is contributed by 63-70 (GKGGVGKS). Positions 240 and 243 each coordinate [4Fe-4S] cluster.

Belongs to the Mrp/NBP35 ATP-binding proteins family. NUBP1/NBP35 subfamily. Heterotetramer of 2 Nubp1 and 2 Nubp2 chains. It depends on [4Fe-4S] cluster as a cofactor.

Its subcellular location is the cytoplasm. Its function is as follows. Component of the cytosolic iron-sulfur (Fe/S) protein assembly (CIA) machinery. Required for maturation of extramitochondrial Fe-S proteins. The Nubp1-Nubp2 heterotetramer forms a Fe-S scaffold complex, mediating the de novo assembly of an Fe-S cluster and its transfer to target apoproteins. The protein is Cytosolic Fe-S cluster assembly factor Nubp1 homolog of Drosophila melanogaster (Fruit fly).